The following is a 273-amino-acid chain: Type III pantothenate kinase (273 aa).

Asp-5 to Val-12 is an ATP binding site. Gly-112 to Leu-115 contributes to the substrate binding site. The active-site Proton acceptor is the Asp-114. Position 134 (Asp-134) interacts with K(+). Residue Thr-137 participates in ATP binding. Residue Thr-189 participates in substrate binding.

This sequence belongs to the type III pantothenate kinase family. As to quaternary structure, homodimer. NH4(+) is required as a cofactor. The cofactor is K(+).

It localises to the cytoplasm. The catalysed reaction is (R)-pantothenate + ATP = (R)-4'-phosphopantothenate + ADP + H(+). It functions in the pathway cofactor biosynthesis; coenzyme A biosynthesis; CoA from (R)-pantothenate: step 1/5. Catalyzes the phosphorylation of pantothenate (Pan), the first step in CoA biosynthesis. This Treponema pallidum subsp. pallidum (strain SS14) protein is Type III pantothenate kinase.